We begin with the raw amino-acid sequence, 295 residues long: Proline iminopeptidase (295 aa).

The region spanning 35–279 (TLHGGPGMSH…ACSHLTMWED (245 aa)) is the AB hydrolase-1 domain. The Nucleophile role is filled by Ser-107. Asp-246 is an active-site residue. The Proton donor role is filled by His-273.

This sequence belongs to the peptidase S33 family. As to quaternary structure, part of the tricorn proteolytic complex.

The catalysed reaction is Release of N-terminal proline from a peptide.. Its function is as follows. Cleaves H-Pro-AMC as well as a wide spectrum of amino acid substrates and several peptide substrates without a proline at the N-terminus. In conjunction with the three factors F1, F2 and F3, Tricorn degrades oligopeptides in a sequential manner, yielding free amino acids. The polypeptide is Proline iminopeptidase (pip) (Thermoplasma volcanium (strain ATCC 51530 / DSM 4299 / JCM 9571 / NBRC 15438 / GSS1)).